A 70-amino-acid chain; its full sequence is UPF0434 protein MCA0634 (70 aa).

It belongs to the UPF0434 family.

The polypeptide is UPF0434 protein MCA0634 (Methylococcus capsulatus (strain ATCC 33009 / NCIMB 11132 / Bath)).